A 453-amino-acid polypeptide reads, in one-letter code: Citrate (Re)-synthase (453 aa).

The 271-residue stretch at 46 to 316 (IYITDTTFRD…TKNMKLHVIT (271 aa)) folds into the Pyruvate carboxyltransferase domain.

Belongs to the alpha-IPM synthase/homocitrate synthase family. Mn(2+) is required as a cofactor. It depends on Co(2+) as a cofactor. The cofactor is Mg(2+).

It carries out the reaction oxaloacetate + acetyl-CoA + H2O = citrate + CoA + H(+). Inhibited by p-chloromercuribenzoate (pCMB), EDTA, Zn(2+) ions, and under aerobic conditions. In terms of biological role, catalyzes the condensation of the acetyl group of acetyl-CoA with oxaloacetate to form citrate. This enzyme is highly Re-face stereospecific with respect to the C-2 of oxaloacetate. This chain is Citrate (Re)-synthase, found in Clostridium kluyveri (strain ATCC 8527 / DSM 555 / NBRC 12016 / NCIMB 10680 / K1).